Reading from the N-terminus, the 175-residue chain is Adenine phosphoribosyltransferase (175 aa).

This sequence belongs to the purine/pyrimidine phosphoribosyltransferase family. Homodimer.

It localises to the cytoplasm. It catalyses the reaction AMP + diphosphate = 5-phospho-alpha-D-ribose 1-diphosphate + adenine. It functions in the pathway purine metabolism; AMP biosynthesis via salvage pathway; AMP from adenine: step 1/1. In terms of biological role, catalyzes a salvage reaction resulting in the formation of AMP, that is energically less costly than de novo synthesis. The polypeptide is Adenine phosphoribosyltransferase (Synechococcus sp. (strain JA-2-3B'a(2-13)) (Cyanobacteria bacterium Yellowstone B-Prime)).